The chain runs to 675 residues: MNTVSSSDQARVQELRQLLQKASYAYYGLDAPLMEDAVYDQLYHELVDLEAQYPQLITPDSPTQRVGERPATQFVSVQHRIPLYSLENAFDRGDMDTWDERWHKLVPNLSQEPGYVTELKIDGSALALTYENGLLVRGTTRGDGTKGEEITQNVRTIRSIPLRLNIEHPPEWLEVRGEAFLGLQVFDQINRDRIQAGEAEFANPRNAAAGTLRQLDSKVVAERKLDFFAYTIHISGPTDDLALPQTQWQALETLKQLGFRVNPNRRQCESLAEVQTYYDDWSLKRLDLPYLTDGVVIKLDNLGVQDELGFTQKFPRWAIAWKYPPEEAATRIEQITVNVGRTGALTPVAEFKPVQLAGTTVSRATLHNRDRISELDIHIGDTVVVRKAGEIIPEVLRVLPELRPAGAQPYQMPTACPSCGQPAVQLETEAVTRCVNASCPAILRGSLIHWVSRGALDIDGLGEKIVGQLTDSQMVQSVADLYELNEDKLMDLDRMGTKLARKIVSAIATSKQQPWHRVLYGLGIRHVGSVNAQLLTENYPTVDALMAVDGDKIATIHGIGPEIAQSVYEWFQTPTNQTLIQRLQSAGLQFEAIVSESTQPQTLSGKTFVITGTLPTLKRDQAKQMIQDAGGKVTGSVSKNTSYVVVGADAGSKLTKAQSLGINQLSEADLLALLQ.

Residues 36–40, 85–86, and E118 each bind NAD(+); these read DAVYD and SL. The active-site N6-AMP-lysine intermediate is the K120. Positions 141, 178, 298, and 322 each coordinate NAD(+). Zn(2+) is bound by residues C416, C419, C434, and C439. In terms of domain architecture, BRCT spans 598–675; the sequence is TQPQTLSGKT…SEADLLALLQ (78 aa).

Belongs to the NAD-dependent DNA ligase family. LigA subfamily. Mg(2+) is required as a cofactor. Mn(2+) serves as cofactor.

It catalyses the reaction NAD(+) + (deoxyribonucleotide)n-3'-hydroxyl + 5'-phospho-(deoxyribonucleotide)m = (deoxyribonucleotide)n+m + AMP + beta-nicotinamide D-nucleotide.. DNA ligase that catalyzes the formation of phosphodiester linkages between 5'-phosphoryl and 3'-hydroxyl groups in double-stranded DNA using NAD as a coenzyme and as the energy source for the reaction. It is essential for DNA replication and repair of damaged DNA. The polypeptide is DNA ligase (Acaryochloris marina (strain MBIC 11017)).